The sequence spans 118 residues: Large ribosomal subunit protein eL18 (118 aa).

Belongs to the eukaryotic ribosomal protein eL18 family.

This chain is Large ribosomal subunit protein eL18, found in Nanoarchaeum equitans (strain Kin4-M).